The following is a 316-amino-acid chain: MIKLGIVMDPISSINIKKDSSFAMMLEAQRRGYEIHYMEMNDLHLDQGKAIADTKVVELKEDPNGWYEFKSEQMIELSELDAVLMRKDPPFDTEYIYATYILERAEEQGALIVNKPQSLRDCNEKLFTAWFPELTPTTIVTRKAEKIKAFREEHGDVILKPLDGMGGASIFRVKENDPNVSVIIETLTNHGQNYAMAQTFVPDISNGDKRILVVDGEPMPYCLARIPAKGETRGNLAAGGTGEARPLSETDMKIAQAVAPTLKEKGLIFVGLDVIGDKLTEINVTSPTCIREIEAAFDISITGKLMDAIERRVKGE.

In terms of domain architecture, ATP-grasp spans 124 to 310; that stretch reads EKLFTAWFPE…ITGKLMDAIE (187 aa). 150-207 is an ATP binding site; that stretch reads FREEHGDVILKPLDGMGGASIFRVKENDPNVSVIIETLTNHGQNYAMAQTFVPDISNG. 2 residues coordinate Mg(2+): Glu281 and Asn283.

This sequence belongs to the prokaryotic GSH synthase family. Mg(2+) serves as cofactor. The cofactor is Mn(2+).

The enzyme catalyses gamma-L-glutamyl-L-cysteine + glycine + ATP = glutathione + ADP + phosphate + H(+). It functions in the pathway sulfur metabolism; glutathione biosynthesis; glutathione from L-cysteine and L-glutamate: step 2/2. This chain is Glutathione synthetase, found in Vibrio parahaemolyticus serotype O3:K6 (strain RIMD 2210633).